A 464-amino-acid polypeptide reads, in one-letter code: tRNA(Ile)-lysidine synthase (464 aa).

S30–S35 contributes to the ATP binding site.

Belongs to the tRNA(Ile)-lysidine synthase family.

The protein resides in the cytoplasm. The enzyme catalyses cytidine(34) in tRNA(Ile2) + L-lysine + ATP = lysidine(34) in tRNA(Ile2) + AMP + diphosphate + H(+). In terms of biological role, ligates lysine onto the cytidine present at position 34 of the AUA codon-specific tRNA(Ile) that contains the anticodon CAU, in an ATP-dependent manner. Cytidine is converted to lysidine, thus changing the amino acid specificity of the tRNA from methionine to isoleucine. This Shewanella oneidensis (strain ATCC 700550 / JCM 31522 / CIP 106686 / LMG 19005 / NCIMB 14063 / MR-1) protein is tRNA(Ile)-lysidine synthase.